We begin with the raw amino-acid sequence, 185 residues long: MKLIVALGNPGLKYEKTKHNTGFMALDHYLDEKGLRLDRDKFTALYAKEKVAGEDVIFMEPQTYMNESGRAVGAAAKFFKIDPSDILVIHDDMDMPIAKLRIRAGGKSGGHNGIKSIIACLGTEKFNRLKIGIRHPDKQSVVSWVLTPFNPDQQKELEASFAKVDQIIDDFIAGKDAQYLMNRYN.

Tyr14 provides a ligand contact to tRNA. His19 acts as the Proton acceptor in catalysis. 3 residues coordinate tRNA: Tyr64, Asn66, and Asn112.

The protein belongs to the PTH family. In terms of assembly, monomer.

It is found in the cytoplasm. It carries out the reaction an N-acyl-L-alpha-aminoacyl-tRNA + H2O = an N-acyl-L-amino acid + a tRNA + H(+). Functionally, hydrolyzes ribosome-free peptidyl-tRNAs (with 1 or more amino acids incorporated), which drop off the ribosome during protein synthesis, or as a result of ribosome stalling. In terms of biological role, catalyzes the release of premature peptidyl moieties from peptidyl-tRNA molecules trapped in stalled 50S ribosomal subunits, and thus maintains levels of free tRNAs and 50S ribosomes. This chain is Peptidyl-tRNA hydrolase, found in Lactobacillus delbrueckii subsp. bulgaricus (strain ATCC 11842 / DSM 20081 / BCRC 10696 / JCM 1002 / NBRC 13953 / NCIMB 11778 / NCTC 12712 / WDCM 00102 / Lb 14).